The sequence spans 165 residues: Nascent polypeptide-associated complex subunit beta (165 aa).

The NAC-A/B domain occupies 33–97 (TTDDKRLQST…PQTKKLQDIL (65 aa)). Residues 120–165 (QKQAPGAGDVPATIQEEDDDDDVPDLVVGETFETPATEEAPKAAAS) are disordered. Residues 134-143 (QEEDDDDDVP) are compositionally biased toward acidic residues. Over residues 144-165 (DLVVGETFETPATEEAPKAAAS) the composition is skewed to low complexity.

It belongs to the NAC-beta family. As to quaternary structure, part of the nascent polypeptide-associated complex (NAC).

This chain is Nascent polypeptide-associated complex subunit beta, found in Arabidopsis thaliana (Mouse-ear cress).